Consider the following 75-residue polypeptide: Small ribosomal subunit protein bS18 (75 aa).

It belongs to the bacterial ribosomal protein bS18 family. In terms of assembly, part of the 30S ribosomal subunit. Forms a tight heterodimer with protein bS6.

Binds as a heterodimer with protein bS6 to the central domain of the 16S rRNA, where it helps stabilize the platform of the 30S subunit. The protein is Small ribosomal subunit protein bS18 of Thermotoga sp. (strain RQ2).